The sequence spans 632 residues: Protein EAP1 (632 aa).

Disordered stretches follow at residues 1-80 (MELN…KKNK), 149-204 (MGPP…DDEE), and 248-313 (KSKG…PSLS). Composition is skewed to polar residues over residues 7–38 (SIISSSQFSGELSDSDTAAATHKSQQAISNLF) and 54–69 (VESSTDSSNISVATSG). A Phosphoserine modification is found at serine 30. Phosphoserine is present on residues serine 281 and serine 282. Over residues 288 to 298 (NLKRQDKKEES) the composition is skewed to basic and acidic residues. Residues serine 327 and serine 344 each carry the phosphoserine modification. Positions 347–378 (SLPSLDNNNQVPSSNVSVVNNDGNSTPHQSGS) are disordered. Positions 353-371 (NNNQVPSSNVSVVNNDGNS) are enriched in low complexity. The residue at position 387 (serine 387) is a Phosphoserine. Disordered regions lie at residues 429–541 (QHPP…PPPP) and 587–632 (QGNF…KNIK). An ATP-binding site is contributed by 440 to 447 (GLLNKGKS). Residues 474–486 (PNFPQRMMPPPPG) are compositionally biased toward pro residues. Positions 492 to 505 (KDSKDVNKKEDRQL) are enriched in basic and acidic residues. Polar residues-rich tracts occupy residues 507–516 (QNKNPNGTRN), 590–603 (FPPNFQQGFGSNSP), and 610–621 (INANGKNVTNQL).

As to quaternary structure, interacts with SMY2, SYH1 and eIF4E.

Its subcellular location is the cytoplasm. Can regulate translation through binding to eIF4E. Competes with eIF4G and p20 for binding to eIF4E in vivo and inhibits cap-dependent translation in vitro. Plays a role in cell growth and is implicated in the TOR signaling cascade. Functions independently of eIF4E to maintain genetic stability and to attenuate GCN4 translation upon TOR inactivation. This chain is Protein EAP1 (EAP1), found in Saccharomyces cerevisiae (strain ATCC 204508 / S288c) (Baker's yeast).